The following is a 464-amino-acid chain: Cystathionine beta-lyase, chloroplastic (464 aa).

The N-terminal 55 residues, 1–55 (MTSSLSLHSSFVPSFADLSDRGLISKNSPTSVSISKVPTWEKKQISNRNSFKLNC), are a transit peptide targeting the chloroplast. Positions 127, 129, 157, 158, 275, and 277 each coordinate pyridoxal 5'-phosphate. The residue at position 278 (Lys278) is an N6-(pyridoxal phosphate)lysine.

Belongs to the trans-sulfuration enzymes family. As to quaternary structure, forms homodimers. May form homotetramers from two homodimers. Pyridoxal 5'-phosphate serves as cofactor.

It is found in the plastid. The protein localises to the chloroplast. The catalysed reaction is L,L-cystathionine + H2O = L-homocysteine + pyruvate + NH4(+). It catalyses the reaction an S-substituted L-cysteine + H2O = a thiol + pyruvate + NH4(+). It participates in amino-acid biosynthesis; L-methionine biosynthesis via de novo pathway; L-homocysteine from L-cystathionine: step 1/1. Its function is as follows. Catalyzes the penultimate step in the de novo biosynthesis of methionine. Its role in methionine metabolism may affect plant development in different organs, probably by modifying plant auxin transport. Its cysteine desulfhydrase activity may be involved in hydrogen sulfur production using L-cysteine as a substrate. This Arabidopsis thaliana (Mouse-ear cress) protein is Cystathionine beta-lyase, chloroplastic.